We begin with the raw amino-acid sequence, 147 residues long: 16 kDa heat shock protein B (147 aa).

The region spanning 29–141 is the sHSP domain; sequence NEAGSTYPPY…APSAFRSAAA (113 aa).

Belongs to the small heat shock protein (HSP20) family.

In Azotobacter vinelandii, this protein is 16 kDa heat shock protein B (ibpB).